We begin with the raw amino-acid sequence, 224 residues long: UPF0441 protein PC1_0312 (224 aa).

Residues 178-224 (PKTALAPKPATTSTITRGGFGETVAKQNSMQRSSASSSSSSSRSMGG) form a disordered region. Residues 209–224 (RSSASSSSSSSRSMGG) show a composition bias toward low complexity.

The protein belongs to the UPF0441 family.

In Pectobacterium carotovorum subsp. carotovorum (strain PC1), this protein is UPF0441 protein PC1_0312.